We begin with the raw amino-acid sequence, 150 residues long: Transcriptional repressor NrdR (150 aa).

The segment at 3-34 is a zinc-finger region; it reads CPYCQFEDTRVIDSRLASEGEQVRRRRECNRC. An ATP-cone domain is found at 49-139; it reads PRIVKRDGTR…VYRSFEDVSA (91 aa).

This sequence belongs to the NrdR family. Zn(2+) is required as a cofactor.

Functionally, negatively regulates transcription of bacterial ribonucleotide reductase nrd genes and operons by binding to NrdR-boxes. In Alkalilimnicola ehrlichii (strain ATCC BAA-1101 / DSM 17681 / MLHE-1), this protein is Transcriptional repressor NrdR.